Reading from the N-terminus, the 576-residue chain is Proteinaceous RNase P 3 (576 aa).

Positions 65 to 75 (NRRSRHDDESP) are enriched in basic and acidic residues. The tract at residues 65–88 (NRRSRHDDESPKNPNKKKKGNRNP) is disordered. 4 PPR repeats span residues 88-123 (PEKSLLINLHSCSKRKDLSAALALYDAAITSSDIRL), 129-166 (QSLLYLCSAFISDPSLQTVAIDRGFQIFDRMVSSGISP), 167-201 (NESSVTAVARLAAAKGDGDYAFKLVKDLVAVGGVS), and 204-238 (RLRTYAPALLCFCDTLEAEKGYEVEDHMDASGIVL). The 236-residue stretch at 335 to 570 (SSAGKCLSCD…KEESLRSWMC (236 aa)) folds into the PRORP domain. Residues cysteine 340 and cysteine 343 each coordinate Zn(2+). Residues aspartate 402, aspartate 480, aspartate 481, and aspartate 499 each coordinate Mn(2+). Positions 553 and 570 each coordinate Zn(2+).

Belongs to the PPR family. P subfamily. Requires Mg(2+) as cofactor. Mn(2+) is required as a cofactor.

Its subcellular location is the nucleus. It carries out the reaction Endonucleolytic cleavage of RNA, removing 5'-extranucleotides from tRNA precursor.. Functionally, endonuclease RNase P responsible for the 5' maturation of tRNA precursors. Also involved in the maturation of mRNA and small nucleolar RNA (snoRNA). This Arabidopsis thaliana (Mouse-ear cress) protein is Proteinaceous RNase P 3 (PRORP3).